The following is a 289-amino-acid chain: Testis-expressed protein 26 (289 aa).

Residues 1 to 26 (MEQPGPRAPDPSLCHHNLQPTDDPNW) form a disordered region. Mn regions lie at residues 30–42 (ATTM…PKTG), 69–83 (QTQY…SHSK), 144–157 (ISLT…RSKA), 179–193 (DTEF…AKIP), and 233–247 (QTTY…YPDF).

This Homo sapiens (Human) protein is Testis-expressed protein 26 (TEX26).